We begin with the raw amino-acid sequence, 150 residues long: SsrA-binding protein (150 aa).

The protein belongs to the SmpB family.

The protein localises to the cytoplasm. Functionally, required for rescue of stalled ribosomes mediated by trans-translation. Binds to transfer-messenger RNA (tmRNA), required for stable association of tmRNA with ribosomes. tmRNA and SmpB together mimic tRNA shape, replacing the anticodon stem-loop with SmpB. tmRNA is encoded by the ssrA gene; the 2 termini fold to resemble tRNA(Ala) and it encodes a 'tag peptide', a short internal open reading frame. During trans-translation Ala-aminoacylated tmRNA acts like a tRNA, entering the A-site of stalled ribosomes, displacing the stalled mRNA. The ribosome then switches to translate the ORF on the tmRNA; the nascent peptide is terminated with the 'tag peptide' encoded by the tmRNA and targeted for degradation. The ribosome is freed to recommence translation, which seems to be the essential function of trans-translation. The sequence is that of SsrA-binding protein from Borreliella burgdorferi (strain ATCC 35210 / DSM 4680 / CIP 102532 / B31) (Borrelia burgdorferi).